Reading from the N-terminus, the 128-residue chain is Photosystem II reaction center Psb28 protein (128 aa).

Residues 109 to 128 form a disordered region; that stretch reads SGLGYSQDSGEAPASDSSNG. Residues 111–128 are compositionally biased toward polar residues; sequence LGYSQDSGEAPASDSSNG.

The protein belongs to the Psb28 family. As to quaternary structure, part of the photosystem II complex.

The protein localises to the cellular thylakoid membrane. This chain is Photosystem II reaction center Psb28 protein, found in Synechococcus sp. (strain CC9311).